We begin with the raw amino-acid sequence, 359 residues long: 4-galactosyl-N-acetylglucosaminide 3-alpha-L-fucosyltransferase 9 (359 aa).

Residues 1-11 (MTSASKGILRP) lie on the Cytoplasmic side of the membrane. Residues 12–32 (FLIVCIILACSMVCLFIYIKP) form a helical; Signal-anchor for type II membrane protein membrane-spanning segment. The Lumenal segment spans residues 33–359 (TNSWIFSPME…VGNLEKWFWN (327 aa)). A glycan (N-linked (GlcNAc...) asparagine) is linked at N62. Residues 63-168 (ETTILIWVWP…RRDSDIQVPY (106 aa)) form an acceptor-binding region. Q75 contributes to the a beta-D-galactosyl-(1-&gt;4)-N-acetyl-beta-D-glucosaminyl derivative binding site. Cystine bridges form between C82–C335, C91–C338, and C190–C238. Residue N101 is glycosylated (N-linked (GlcNAc...) asparagine). Residue E137 coordinates a beta-D-galactosyl-(1-&gt;4)-N-acetyl-beta-D-glucosaminyl derivative. The Nucleophile role is filled by E137. E137 is a GDP-beta-L-fucose binding site. N153 carries an N-linked (GlcNAc...) asparagine glycan. Positions 168, 192, 194, 195, 202, 226, 241, 246, 252, 255, and 256 each coordinate GDP-beta-L-fucose. A donor-binding region spans residues 169–326 (GFLTVSTNPF…NWRKDFTVNL (158 aa)). Residues 327-359 (PRFWESHACLACDHVKRHQEYKSVGNLEKWFWN) are acceptor-binding.

It belongs to the glycosyltransferase 10 family. As to quaternary structure, homodimer. N-glycosylated with complex-type N-glycans.

It localises to the golgi apparatus. The protein localises to the trans-Golgi network membrane. It is found in the golgi apparatus membrane. The catalysed reaction is a beta-D-galactosyl-(1-&gt;4)-N-acetyl-beta-D-glucosaminyl derivative + GDP-beta-L-fucose = a beta-D-galactosyl-(1-&gt;4)-[alpha-L-fucosyl-(1-&gt;3)]-N-acetyl-beta-D-glucosaminyl derivative + GDP + H(+). It carries out the reaction an alpha-Neu5Ac-(2-&gt;3)-beta-D-Gal-(1-&gt;4)-beta-D-GlcNAc-(1-&gt;3)-beta-D-Gal-(1-&gt;4)-beta-D-GlcNAc derivative + GDP-beta-L-fucose = an alpha-Neu5Ac-(2-&gt;3)-beta-D-Gal-(1-&gt;4)-beta-D-GlcNAc-(1-&gt;3)-beta-D-Gal-(1-&gt;4)-[alpha-L-Fuc-(1-&gt;3)]-beta-D-GlcNAc derivative + GDP + H(+). It catalyses the reaction alpha-N-glycoloylneuraminosyl-(2-&gt;3)-beta-D-galactosyl-(1-&gt;4)-N-acetyl-beta-D-glucosaminyl-(1-&gt;3)-beta-D-galactosyl-(1-&gt;4)-N-acetyl-beta-D-glucosaminyl-(1-&gt;3)-beta-D-galactosyl-(1-&gt;4)-beta-D-glucosyl-(1&lt;-&gt;1')-ceramide + GDP-beta-L-fucose = alpha-N-glycoloylneuraminosyl-(2-&gt;3)-beta-D-galactosyl-(1-&gt;4)-N-acetyl-beta-D-glucosaminyl-(1-&gt;3)-beta-D-galactosyl-(1-&gt;4)-[alpha-L-fucosyl-(1-&gt;3)]-N-acetyl-beta-D-glucosaminyl-(1-&gt;3)-beta-D-galactosyl-(1-&gt;4)-beta-D-glucosyl-(1&lt;-&gt;1')-ceramide + GDP + H(+). The enzyme catalyses alpha-D-galactosyl-(1-&gt;3)-beta-D-galactosyl-(1-&gt;4)-N-acetyl-beta-D-glucosaminyl-(1-&gt;3)-beta-D-galactosyl-(1-&gt;4)-beta-D-glucosyl-(1&lt;-&gt;1')-ceramide + GDP-beta-L-fucose = a neolactoside IV(3)-alpha-Gal,III(3)-alpha-Fuc-nLc4Cer + GDP + H(+). The catalysed reaction is a neolactoside nLc4Cer + GDP-beta-L-fucose = a neolactoside III(3)-alpha-Fuc-nLc4Cer + GDP + H(+). It carries out the reaction an N-acetyl-alpha-neuraminyl-(2-&gt;3)-beta-D-galactosyl-(1-&gt;4)-N-acetyl-beta-D-glucosaminyl derivative + GDP-beta-L-fucose = an alpha-Neu5Ac-(2-&gt;3)-beta-D-Gal-(1-&gt;4)-[alpha-L-Fuc-(1-&gt;3)]-beta-D-GlcNAc derivative + GDP + H(+). It catalyses the reaction beta-D-Gal-(1-&gt;4)-beta-D-GlcNAc-(1-&gt;3)-beta-D-Gal-(1-&gt;4)-D-Glc + GDP-beta-L-fucose = beta-D-Gal-(1-&gt;4)-[alpha-L-Fuc-(1-&gt;3)]-beta-D-GlcNAc-(1-&gt;3)-beta-D-Gal-(1-&gt;4)-D-Glc + GDP + H(+). The enzyme catalyses an alpha-L-Fuc-(1-&gt;2)-beta-D-Gal-(1-&gt;4)-beta-D-GlcNAc derivative + GDP-beta-L-fucose = an alpha-L-Fuc-(1-&gt;2)-beta-D-Gal-(1-&gt;4)-[alpha-L-Fuc-(1-&gt;3)]-beta-D-GlcNAc derivative + GDP + H(+). Its pathway is protein modification; protein glycosylation. It participates in glycolipid biosynthesis. With respect to regulation, activated by Mn2+. In terms of biological role, catalyzes alpha(1-&gt;3) linkage of fucosyl moiety transferred from GDP-beta-L-fucose to N-acetyl glucosamine (GlcNAc) within type 2 lactosamine (LacNAc, beta-D-Gal-(1-&gt;4)-beta-D-GlcNAc-) glycan attached to glycolipids and N- or O-linked glycoproteins. Fucosylates distal type 2 LacNAc and its fucosylated (H-type 2 LacNAc) and sialylated (sialyl-type 2 LacNAc) derivatives to form Lewis x (Lex) (CD15) and Lewis y (Ley) antigenic epitopes involved in cell adhesion and differentiation. Generates Lex epitopes in the brain, presumably playing a role in the maintenance of neuronal stemness and neurite outgrowth in progenitor neural cells. Fucosylates the internal type 2 LacNAc unit of the polylactosamine chain to form VIM-2 antigen that serves as recognition epitope for SELE. Can also modify milk oligosaccharides in particular type 2 tetrasaccharide LNnT. The protein is 4-galactosyl-N-acetylglucosaminide 3-alpha-L-fucosyltransferase 9 of Bos taurus (Bovine).